The following is a 309-amino-acid chain: Nucleoside kinase (309 aa).

Residues aspartate 16, glycine 42, and asparagine 46 each contribute to the substrate site. Glutamine 108 provides a ligand contact to ATP. Residues 110 to 112 and glutamine 166 contribute to the substrate site; that span reads SYF. ATP contacts are provided by residues asparagine 189 and 217-223; that span reads KTYGKEG. Residue aspartate 249 participates in substrate binding. The active-site Proton acceptor is aspartate 249.

The protein belongs to the carbohydrate kinase PfkB family. Homodimer. Requires Mg(2+) as cofactor.

Catalyzes the phosphorylation of a wide range of nucleosides to yield nucleoside monophosphates, using ATP, ITP or GTP as phosphate donor. This is Nucleoside kinase from Methanothermobacter thermautotrophicus (strain ATCC 29096 / DSM 1053 / JCM 10044 / NBRC 100330 / Delta H) (Methanobacterium thermoautotrophicum).